Here is a 313-residue protein sequence, read N- to C-terminus: Putative S-adenosyl-L-methionine-dependent methyltransferase MAV_5150 (313 aa).

Residues Asp-139 and 168–169 contribute to the S-adenosyl-L-methionine site; that span reads DL.

Belongs to the UPF0677 family.

In terms of biological role, exhibits S-adenosyl-L-methionine-dependent methyltransferase activity. The protein is Putative S-adenosyl-L-methionine-dependent methyltransferase MAV_5150 of Mycobacterium avium (strain 104).